The primary structure comprises 229 residues: Adenosylcobinamide-GDP ribazoletransferase (229 aa).

6 helical membrane passes run 31–51 (AMLLAPLAALPLGLLVAAVLA), 55–75 (AVELPPLAVGLLAVGALAASS), 111–131 (AGVLATVVVAGVQAAALATLL), 134–154 (PLLAGALVCLSRCALWIVCCT), 176–196 (VAVLGGLLLSAVGGLVVLVLV), and 208–228 (GDVMGAAVELALAATLLAWAA).

This sequence belongs to the CobS family. Mg(2+) serves as cofactor.

Its subcellular location is the cell membrane. It catalyses the reaction alpha-ribazole + adenosylcob(III)inamide-GDP = adenosylcob(III)alamin + GMP + H(+). It carries out the reaction alpha-ribazole 5'-phosphate + adenosylcob(III)inamide-GDP = adenosylcob(III)alamin 5'-phosphate + GMP + H(+). Its pathway is cofactor biosynthesis; adenosylcobalamin biosynthesis; adenosylcobalamin from cob(II)yrinate a,c-diamide: step 7/7. Functionally, joins adenosylcobinamide-GDP and alpha-ribazole to generate adenosylcobalamin (Ado-cobalamin). Also synthesizes adenosylcobalamin 5'-phosphate from adenosylcobinamide-GDP and alpha-ribazole 5'-phosphate. The polypeptide is Adenosylcobinamide-GDP ribazoletransferase (Nocardioides sp. (strain ATCC BAA-499 / JS614)).